Here is a 673-residue protein sequence, read N- to C-terminus: Methionine--tRNA ligase (673 aa).

Residues 13–23 carry the 'HIGH' region motif; that stretch reads PYTNGFCHLGH. Zn(2+)-binding residues include cysteine 144, cysteine 147, cysteine 156, and cysteine 160. The 'KMSKS' region signature appears at 325–329; it reads KFSKS. An ATP-binding site is contributed by lysine 328. The tRNA-binding domain occupies 575-673; that stretch reads DVAKLDLRVG…KDVPEGTKVH (99 aa).

Belongs to the class-I aminoacyl-tRNA synthetase family. MetG type 1 subfamily. Homodimer. Requires Zn(2+) as cofactor.

Its subcellular location is the cytoplasm. It catalyses the reaction tRNA(Met) + L-methionine + ATP = L-methionyl-tRNA(Met) + AMP + diphosphate. Is required not only for elongation of protein synthesis but also for the initiation of all mRNA translation through initiator tRNA(fMet) aminoacylation. This chain is Methionine--tRNA ligase, found in Methanocorpusculum labreanum (strain ATCC 43576 / DSM 4855 / Z).